A 205-amino-acid chain; its full sequence is Small ribosomal subunit protein uS4 (205 aa).

A compositionally biased stretch (basic and acidic residues) spans 1–16; sequence MSKRETTKYKIDRRMG. A disordered region spans residues 1–46; sequence MSKRETTKYKIDRRMGENIWGRPKSPVNRRDYGPGQHGQRRKGKLS. The region spanning 94–157 is the S4 RNA-binding domain; sequence SRLDAVVYRA…KQLVLVLESV (64 aa).

Belongs to the universal ribosomal protein uS4 family. As to quaternary structure, part of the 30S ribosomal subunit. Contacts protein S5. The interaction surface between S4 and S5 is involved in control of translational fidelity.

One of the primary rRNA binding proteins, it binds directly to 16S rRNA where it nucleates assembly of the body of the 30S subunit. Its function is as follows. With S5 and S12 plays an important role in translational accuracy. This is Small ribosomal subunit protein uS4 from Bartonella tribocorum (strain CIP 105476 / IBS 506).